Here is a 450-residue protein sequence, read N- to C-terminus: Cysteine protease ATG4C (450 aa).

Residue cysteine 112 is the Nucleophile of the active site. Catalysis depends on residues aspartate 336 and histidine 338.

Belongs to the peptidase C54 family.

It is found in the cytoplasm. The enzyme catalyses [protein]-C-terminal L-amino acid-glycyl-phosphatidylethanolamide + H2O = [protein]-C-terminal L-amino acid-glycine + a 1,2-diacyl-sn-glycero-3-phosphoethanolamine. Functionally, cysteine protease that plays a key role in autophagy by mediating both proteolytic activation and delipidation of ATG8 family proteins. The protease activity is required for proteolytic activation of ATG8 family proteins: cleaves the C-terminal amino acid of ATG8 proteins to reveal a C-terminal glycine. Exposure of the glycine at the C-terminus is essential for ATG8 proteins conjugation to phosphatidylethanolamine (PE) and insertion to membranes, which is necessary for autophagy. In addition to the protease activity, also mediates delipidation of ATG8 family proteins. Catalyzes delipidation of PE-conjugated forms of ATG8 proteins during macroautophagy. The protein is Cysteine protease ATG4C of Xenopus tropicalis (Western clawed frog).